The primary structure comprises 542 residues: Chaperonin GroEL 2 (542 aa).

ATP-binding positions include 30–33 (TLGP), lysine 51, 87–91 (DGTTT), glycine 415, and aspartate 494.

It belongs to the chaperonin (HSP60) family. As to quaternary structure, forms a cylinder of 14 subunits composed of two heptameric rings stacked back-to-back. Interacts with the co-chaperonin GroES.

It is found in the cytoplasm. The enzyme catalyses ATP + H2O + a folded polypeptide = ADP + phosphate + an unfolded polypeptide.. Its function is as follows. Together with its co-chaperonin GroES, plays an essential role in assisting protein folding. The GroEL-GroES system forms a nano-cage that allows encapsulation of the non-native substrate proteins and provides a physical environment optimized to promote and accelerate protein folding. In Syntrophobacter fumaroxidans (strain DSM 10017 / MPOB), this protein is Chaperonin GroEL 2.